Consider the following 295-residue polypeptide: F-box protein SKIP24 (295 aa).

Residues 19–66 enclose the F-box; degenerate domain; the sequence is VKSSTFSYKDLCCISISSRRLFRLSCDDSLWDLLLVHDFPNHIVSASS. Coiled-coil stretches lie at residues 82 to 129 and 167 to 209; these read REKE…SSLQ and EGRL…ESMK. Positions 217 to 245 are disordered; sequence KSIRNGDQGSNGKTKKLKTSINYSGDQVS. A compositionally biased stretch (polar residues) spans 235–245; sequence TSINYSGDQVS.

In terms of assembly, part of a SCF (ASK-cullin-F-box) protein ligase complex. Interacts with SKP1A/ASK1 and SPK1B/ASK2.

The protein operates within protein modification; protein ubiquitination. Component of SCF(ASK-cullin-F-box) E3 ubiquitin ligase complexes, which may mediate the ubiquitination and subsequent proteasomal degradation of target proteins. The protein is F-box protein SKIP24 (SKIP24) of Arabidopsis thaliana (Mouse-ear cress).